Here is a 1337-residue protein sequence, read N- to C-terminus: Rho GTPase-activating protein 29 (1337 aa).

A compositionally biased stretch (polar residues) spans 1 to 13 (MFRQGSNSGNKRM). Disordered stretches follow at residues 1 to 20 (MFRQ…ARLS), 369 to 397 (REEY…LEKK), 513 to 551 (SSKT…ADEV), and 564 to 654 (ERRS…TGLS). The region spanning 225 to 488 (EQVDLLLLKN…QAKKYEPGQR (264 aa)) is the F-BAR domain. The stretch at 326–443 (LLARKNDLDK…SEILAQIRKL (118 aa)) forms a coiled coil. A compositionally biased stretch (basic and acidic residues) spans 369–384 (REEYEKARSSTSRTEE). 2 stretches are compositionally biased toward polar residues: residues 525–545 (QNST…SMDN) and 568–579 (NSSIDMQVPRTQ). Over residues 596–613 (CSDSESAGGSSESRSMDS) the composition is skewed to low complexity. Residues 676 to 723 (AHTHKLRKLRAPSKCRECDSLVVFHGAECEECSLACHKKCLETLAIQC) form a Phorbol-ester/DAG-type zinc finger. The Rho-GAP domain occupies 737–950 (IDFAQVVKNS…LLIKHHQMIF (214 aa)). Residues 960–973 (TSPTVSQASFGSSI) are compositionally biased toward polar residues. Disordered stretches follow at residues 960–983 (TSPT…LSRH), 1016–1066 (MKTG…AKPV), 1083–1114 (SRNT…TNFY), 1149–1210 (PPSG…KPSD), and 1273–1337 (TVSR…AHFV). The span at 974-983 (QDKESKLSRH) shows a compositional bias: basic and acidic residues. Positions 1083-1092 (SRNTVEHDHS) are enriched in basic and acidic residues. Composition is skewed to polar residues over residues 1161–1177 (MASQ…SQSG) and 1295–1310 (VTLS…TEEL). Basic and acidic residues predominate over residues 1325-1337 (RMQELEHREAHFV).

GTPase activator for the Rho-type GTPases by converting them to an inactive GDP-bound state. Has strong activity toward RHOA, and weaker activity toward RAC1 and CDC42. The polypeptide is Rho GTPase-activating protein 29 (arhgap29) (Danio rerio (Zebrafish)).